We begin with the raw amino-acid sequence, 318 residues long: NADH-ubiquinone oxidoreductase chain 1 (318 aa).

Transmembrane regions (helical) follow at residues 2–22 (FMINLLLMIVPILLAVAFLTL), 68–88 (ISMFIIAPILALALALTMWTP), 100–120 (LGVLFMLAMSSLAVYSILWSG), 146–166 (LAIILLSVLLLNGSFTLPTLI), 171–191 (HMWLIIPSWPLAMMWFISTLA), 222–242 (LFFLAEYANIIMMNIFTTILF), 253–273 (ELYTINFVTKSMLLTISFLWV), and 293–313 (FLPLTLALCMWHVTMPIITAG).

This sequence belongs to the complex I subunit 1 family. Core subunit of respiratory chain NADH dehydrogenase (Complex I) which is composed of 45 different subunits.

The protein localises to the mitochondrion inner membrane. The catalysed reaction is a ubiquinone + NADH + 5 H(+)(in) = a ubiquinol + NAD(+) + 4 H(+)(out). Core subunit of the mitochondrial membrane respiratory chain NADH dehydrogenase (Complex I) which catalyzes electron transfer from NADH through the respiratory chain, using ubiquinone as an electron acceptor. Essential for the catalytic activity and assembly of complex I. This chain is NADH-ubiquinone oxidoreductase chain 1 (MT-ND1), found in Hipposideros diadema (Diadem leaf-nosed bat).